The sequence spans 353 residues: Anthranilate phosphoribosyltransferase (353 aa).

Residues Gly79, Gly82–Asp83, Thr87, Asn89–Thr92, Lys107–Ser115, and Ser119 contribute to the 5-phospho-alpha-D-ribose 1-diphosphate site. Gly79 is a binding site for anthranilate. Ser91 is a Mg(2+) binding site. Anthranilate is bound at residue Asn110. Arg165 is an anthranilate binding site. Asp223 and Glu224 together coordinate Mg(2+).

This sequence belongs to the anthranilate phosphoribosyltransferase family. As to quaternary structure, homodimer. Mg(2+) is required as a cofactor.

It carries out the reaction N-(5-phospho-beta-D-ribosyl)anthranilate + diphosphate = 5-phospho-alpha-D-ribose 1-diphosphate + anthranilate. It functions in the pathway amino-acid biosynthesis; L-tryptophan biosynthesis; L-tryptophan from chorismate: step 2/5. Catalyzes the transfer of the phosphoribosyl group of 5-phosphorylribose-1-pyrophosphate (PRPP) to anthranilate to yield N-(5'-phosphoribosyl)-anthranilate (PRA). The polypeptide is Anthranilate phosphoribosyltransferase (Methanococcoides burtonii (strain DSM 6242 / NBRC 107633 / OCM 468 / ACE-M)).